The following is a 303-amino-acid chain: N-acetyl-D-glucosamine kinase (303 aa).

ATP is bound by residues Gly-4 to Lys-11 and Gly-133 to Phe-140. Zn(2+) is bound by residues His-157, Cys-177, Cys-179, and Cys-184.

It belongs to the ROK (NagC/XylR) family. NagK subfamily.

The catalysed reaction is N-acetyl-D-glucosamine + ATP = N-acetyl-D-glucosamine 6-phosphate + ADP + H(+). It participates in cell wall biogenesis; peptidoglycan recycling. Functionally, catalyzes the phosphorylation of N-acetyl-D-glucosamine (GlcNAc) derived from cell-wall degradation, yielding GlcNAc-6-P. This chain is N-acetyl-D-glucosamine kinase, found in Aliivibrio fischeri (strain ATCC 700601 / ES114) (Vibrio fischeri).